Consider the following 301-residue polypeptide: Quinolinate synthase (301 aa).

Iminosuccinate contacts are provided by His-21 and Ser-38. Residue Cys-83 coordinates [4Fe-4S] cluster. Residues 109–111 (YIN) and Ser-126 each bind iminosuccinate. [4Fe-4S] cluster is bound at residue Cys-169. Residues 195-197 (HPE) and Thr-212 each bind iminosuccinate. Cys-257 is a binding site for [4Fe-4S] cluster.

This sequence belongs to the quinolinate synthase family. Type 2 subfamily. Requires [4Fe-4S] cluster as cofactor.

It localises to the cytoplasm. The enzyme catalyses iminosuccinate + dihydroxyacetone phosphate = quinolinate + phosphate + 2 H2O + H(+). Its pathway is cofactor biosynthesis; NAD(+) biosynthesis; quinolinate from iminoaspartate: step 1/1. Functionally, catalyzes the condensation of iminoaspartate with dihydroxyacetone phosphate to form quinolinate. In Clostridium perfringens (strain SM101 / Type A), this protein is Quinolinate synthase.